Reading from the N-terminus, the 84-residue chain is Large ribosomal subunit protein bL27 (84 aa).

Residues 1 to 23 (MAHKKGASSSRNGRESAAQRLGV) form a disordered region.

The protein belongs to the bacterial ribosomal protein bL27 family.

The polypeptide is Large ribosomal subunit protein bL27 (Salinispora arenicola (strain CNS-205)).